The primary structure comprises 163 residues: HTH-type transcriptional regulator IscR (163 aa).

Residues 2-131 (RLTSKGRYAV…NNITLGELVN (130 aa)) enclose the HTH rrf2-type domain. The H-T-H motif DNA-binding region spans 28 to 51 (LADISERQGISLSYLEQLFSRLRK). 3 residues coordinate [2Fe-2S] cluster: cysteine 92, cysteine 98, and cysteine 104.

[2Fe-2S] cluster is required as a cofactor.

In terms of biological role, regulates the transcription of several operons and genes involved in the biogenesis of Fe-S clusters and Fe-S-containing proteins. The chain is HTH-type transcriptional regulator IscR from Klebsiella pneumoniae (strain 342).